The primary structure comprises 237 residues: UPF0173 metal-dependent hydrolase BruAb2_0628 (237 aa).

Belongs to the UPF0173 family.

The protein is UPF0173 metal-dependent hydrolase BruAb2_0628 of Brucella abortus biovar 1 (strain 9-941).